An 89-amino-acid polypeptide reads, in one-letter code: Small ribosomal subunit protein uS14 (89 aa).

The protein belongs to the universal ribosomal protein uS14 family. In terms of assembly, part of the 30S ribosomal subunit. Contacts proteins S3 and S10.

In terms of biological role, binds 16S rRNA, required for the assembly of 30S particles and may also be responsible for determining the conformation of the 16S rRNA at the A site. The chain is Small ribosomal subunit protein uS14 from Parabacteroides distasonis (strain ATCC 8503 / DSM 20701 / CIP 104284 / JCM 5825 / NCTC 11152).